The chain runs to 539 residues: CTP synthase (539 aa).

The tract at residues 1-268 (MSFKSIFLTG…SDFLLNKLGF (268 aa)) is amidoligase domain. Residue Ser-14 coordinates CTP. Residue Ser-14 participates in UTP binding. 15–20 (SLGKGL) lines the ATP pocket. Residue Tyr-55 participates in L-glutamine binding. An ATP-binding site is contributed by Asp-72. Asp-72 and Glu-142 together coordinate Mg(2+). CTP-binding positions include 149–151 (DIE), 188–193 (KTKPTQ), and Lys-224. Residues 188–193 (KTKPTQ) and Lys-224 each bind UTP. Leu-242 is an ATP binding site. In terms of domain architecture, Glutamine amidotransferase type-1 spans 294–532 (RIGLVGKYLE…IRAAKAYSLE (239 aa)). Gly-353 serves as a coordination point for L-glutamine. Residue Cys-380 is the Nucleophile; for glutamine hydrolysis of the active site. L-glutamine contacts are provided by residues 381–384 (LGMQ), Glu-404, and Arg-460. Active-site residues include His-505 and Glu-507.

The protein belongs to the CTP synthase family. As to quaternary structure, homotetramer.

It catalyses the reaction UTP + L-glutamine + ATP + H2O = CTP + L-glutamate + ADP + phosphate + 2 H(+). It carries out the reaction L-glutamine + H2O = L-glutamate + NH4(+). The enzyme catalyses UTP + NH4(+) + ATP = CTP + ADP + phosphate + 2 H(+). It participates in pyrimidine metabolism; CTP biosynthesis via de novo pathway; CTP from UDP: step 2/2. Its activity is regulated as follows. Allosterically activated by GTP, when glutamine is the substrate; GTP has no effect on the reaction when ammonia is the substrate. The allosteric effector GTP functions by stabilizing the protein conformation that binds the tetrahedral intermediate(s) formed during glutamine hydrolysis. Inhibited by the product CTP, via allosteric rather than competitive inhibition. Catalyzes the ATP-dependent amination of UTP to CTP with either L-glutamine or ammonia as the source of nitrogen. May be involved in lipopolysaccharide biosynthesis, potentially channelling CTP directly to CMP-KDO synthetase. Regulates intracellular CTP levels through interactions with the four ribonucleotide triphosphates. In Chlamydia trachomatis serovar D (strain ATCC VR-885 / DSM 19411 / UW-3/Cx), this protein is CTP synthase.